The chain runs to 448 residues: N-succinylarginine dihydrolase (448 aa).

Residues 19 to 28 (GGLSYGNVAS), Asn-110, and 137 to 138 (HR) each bind substrate. The active site involves Glu-174. Arg-214 is a binding site for substrate. His-250 is an active-site residue. Substrate contacts are provided by Asp-252 and Asn-365. The active-site Nucleophile is Cys-371.

This sequence belongs to the succinylarginine dihydrolase family. In terms of assembly, homodimer.

It carries out the reaction N(2)-succinyl-L-arginine + 2 H2O + 2 H(+) = N(2)-succinyl-L-ornithine + 2 NH4(+) + CO2. It participates in amino-acid degradation; L-arginine degradation via AST pathway; L-glutamate and succinate from L-arginine: step 2/5. Catalyzes the hydrolysis of N(2)-succinylarginine into N(2)-succinylornithine, ammonia and CO(2). In Pseudomonas paraeruginosa (strain DSM 24068 / PA7) (Pseudomonas aeruginosa (strain PA7)), this protein is N-succinylarginine dihydrolase.